The primary structure comprises 1232 residues: Chromosome-associated kinesin KIF4A (1232 aa).

In terms of domain architecture, Kinesin motor spans 9 to 336 (PVRVALRCRP…LRYADRARKI (328 aa)). ATP is bound at residue 88–95 (GQTGSGKT). A coiled-coil region spans residues 350–999 (ELNHLKQQVQ…IKQKLTLLQV (650 aa)). At Ser-394 the chain carries Phosphoserine. The segment at 496-515 (AQVETSPETSRSSDAFTTQH) is disordered. A compositionally biased stretch (polar residues) spans 497-515 (QVETSPETSRSSDAFTTQH). Residues 663-1232 (QWKQKKDKEV…GCSPIEEEAH (570 aa)) form a required for the interaction with PRC1 region. The Nuclear localization signal motif lies at 793–798 (PKLRRR). Thr-799 carries the phosphothreonine modification. A phosphoserine mark is found at Ser-801, Ser-810, Ser-815, and Ser-951. The residue at position 995 (Thr-995) is a Phosphothreonine. The tract at residues 1000 to 1232 (ASRQKHLPKD…GCSPIEEEAH (233 aa)) is globular. 5 positions are modified to phosphoserine: Ser-1001, Ser-1013, Ser-1017, Ser-1028, and Ser-1126. The segment at 1086-1144 (CSCKGWCGNKQCGCRKQKSDCGVDCCCDPTKCRNRQQGKDSLGTVERTQDSEGSFKLED) is CRD; required for [4Fe-4S] cluster binding and localization to the spindle midzone and midbody during anaphase and telophase. The tract at residues 1122 to 1142 (QGKDSLGTVERTQDSEGSFKL) is disordered. A compositionally biased stretch (basic and acidic residues) spans 1132–1142 (RTQDSEGSFKL). Thr-1181 carries the post-translational modification Phosphothreonine. The residue at position 1186 (Ser-1186) is a Phosphoserine. Residue Lys-1194 forms a Glycyl lysine isopeptide (Lys-Gly) (interchain with G-Cter in SUMO2) linkage. At Ser-1225 the chain carries Phosphoserine.

The protein belongs to the TRAFAC class myosin-kinesin ATPase superfamily. Kinesin family. Chromokinesin subfamily. In terms of assembly, interacts with the cytosolic iron-sulfur protein assembly (CIA) complex components CIAO2B and MMS19; the interactions facilitate the transfer of Fe-S clusters to KIF4A to ensure proper localization of KIF4A to mitotic machinery components. Interacts (via C-terminus) with unphosphorylated PRC1 (via N-terminus); the interaction is required for the progression of mitosis. It depends on [2Fe-2S] cluster as a cofactor. [4Fe-4S] cluster is required as a cofactor. Highly expressed in hematopoietic tissues, fetal liver, spleen, thymus and adult thymus and bone marrow. Lower levels are found in heart, testis, kidney, colon and lung.

Its subcellular location is the nucleus matrix. The protein resides in the cytoplasm. It localises to the cytoskeleton. It is found in the spindle. The protein localises to the midbody. Its subcellular location is the chromosome. Functionally, iron-sulfur (Fe-S) cluster binding motor protein that has a role in chromosome segregation during mitosis. Translocates PRC1 to the plus ends of interdigitating spindle microtubules during the metaphase to anaphase transition, an essential step for the formation of an organized central spindle midzone and midbody and for successful cytokinesis. May play a role in mitotic chromosomal positioning and bipolar spindle stabilization. The chain is Chromosome-associated kinesin KIF4A (KIF4A) from Homo sapiens (Human).